The following is a 1047-amino-acid chain: Ubiquitin carboxyl-terminal hydrolase 48 (1047 aa).

Residues V89–Q416 enclose the USP domain. C98 serves as the catalytic Nucleophile. H348 functions as the Proton acceptor in the catalytic mechanism. DUSP domains follow at residues Q457 to L551, N567 to P697, and M717 to D830. The segment at L609 to E647 is disordered. A compositionally biased stretch (polar residues) spans S621–G631. Positions D635–E647 are enriched in basic and acidic residues. Residues P887 to T928 are disordered. Residues E901–D912 are compositionally biased toward basic and acidic residues. Positions V961–I1012 constitute a Ubiquitin-like domain.

The protein belongs to the peptidase C19 family.

It localises to the cytoplasm. Its subcellular location is the nucleus. The enzyme catalyses Thiol-dependent hydrolysis of ester, thioester, amide, peptide and isopeptide bonds formed by the C-terminal Gly of ubiquitin (a 76-residue protein attached to proteins as an intracellular targeting signal).. Recognizes and hydrolyzes the peptide bond at the C-terminal Gly of ubiquitin. Involved in the processing of poly-ubiquitin precursors as well as that of ubiquitinated proteins. The sequence is that of Ubiquitin carboxyl-terminal hydrolase 48 (usp48) from Danio rerio (Zebrafish).